A 60-amino-acid polypeptide reads, in one-letter code: Cytotoxin 2 (60 aa).

4 disulfide bridges follow: C3-C21, C14-C38, C42-C53, and C54-C59.

It belongs to the three-finger toxin family. Short-chain subfamily. Type IA cytotoxin sub-subfamily. In terms of assembly, monomer in solution; Homodimer and oligomer in the presence of negatively charged lipids forming a pore with a size ranging between 20 and 30 Angstroms. As to expression, expressed by the venom gland.

The protein resides in the secreted. The protein localises to the target cell membrane. Functionally, this three-finger cytotoxin is a basic protein that interacts and penetrates into the cell membrane, with the tips of all the three loops. Cytotoxins which have a Pro-30 (P-type) interacts with membrane stronger that those which have a 'Ser-28' (S-type). CTII interacts with membrane stronger than CTI. This Naja oxiana (Central Asian cobra) protein is Cytotoxin 2.